Reading from the N-terminus, the 239-residue chain is MHQDFQEDEHEYPDIRRNPLHEVTMTSYILGILLGIFVGLFPQIRFKNFNLFIIALSLFHFLEYYITAKYNPLKVHSESFLLNNGKSYMAAHSFAILECLVESFLFPDLKIFSYSLATKLCTVLGCLLVILGQYTRTIAMHTAGHSFSHIVKTKKESDHVLVKTGVYSWSRHPSYLGFFWWAIGTQLLLLNPLSLVIFIFVLWKFFSDRIRVEEKYLIEFFSAEYIEYKNKVGVGIPFI.

Residues 1-23 lie on the Cytoplasmic side of the membrane; that stretch reads MHQDFQEDEHEYPDIRRNPLHEV. A helical transmembrane segment spans residues 24 to 44; sequence TMTSYILGILLGIFVGLFPQI. At 45–47 the chain is on the lumenal side; sequence RFK. The helical transmembrane segment at 48–68 threads the bilayer; the sequence is NFNLFIIALSLFHFLEYYITA. Topologically, residues 69–88 are cytoplasmic; sequence KYNPLKVHSESFLLNNGKSY. Residues 89 to 109 form a helical membrane-spanning segment; that stretch reads MAAHSFAILECLVESFLFPDL. A topological domain (lumenal) is located at residue lysine 110. A helical membrane pass occupies residues 111–131; sequence IFSYSLATKLCTVLGCLLVIL. Topologically, residues 132–175 are cytoplasmic; it reads GQYTRTIAMHTAGHSFSHIVKTKKESDHVLVKTGVYSWSRHPSY. Residues 159-162, tyrosine 167, and 172-175 each bind S-adenosyl-L-methionine; these read HVLV and HPSY. The helical intramembrane region spans 176 to 206; it reads LGFFWWAIGTQLLLLNPLSLVIFIFVLWKFF. Over 207-239 the chain is Cytoplasmic; the sequence is SDRIRVEEKYLIEFFSAEYIEYKNKVGVGIPFI. Arginine 209 lines the substrate pocket. Glutamate 213 lines the S-adenosyl-L-methionine pocket.

Belongs to the class VI-like SAM-binding methyltransferase superfamily. Isoprenylcysteine carboxyl methyltransferase family.

The protein localises to the endoplasmic reticulum membrane. It carries out the reaction [protein]-C-terminal S-[(2E,6E)-farnesyl]-L-cysteine + S-adenosyl-L-methionine = [protein]-C-terminal S-[(2E,6E)-farnesyl]-L-cysteine methyl ester + S-adenosyl-L-homocysteine. Mediates C-terminal methylation of the isoprenylated C-terminal cysteine in A-factor mating pheromone and Ras proteins. Does not have a preference for the farnesyl or geranylgeranyl moieties in the model substrates N-acetyl-S-farnesyl-L-cysteine (AFC) and N-acetyl-S-geranylgeranyl-L-cysteine (AGGC) in vitro. The chain is Protein-S-isoprenylcysteine O-methyltransferase (STE14) from Saccharomyces cerevisiae (strain ATCC 204508 / S288c) (Baker's yeast).